A 176-amino-acid chain; its full sequence is Large ribosomal subunit protein eL6A (176 aa).

Ser-2 is subject to N-acetylserine. Ser-12 is subject to Phosphoserine. A Glycyl lysine isopeptide (Lys-Gly) (interchain with G-Cter in ubiquitin) cross-link involves residue Lys-128.

This sequence belongs to the eukaryotic ribosomal protein eL6 family. As to quaternary structure, component of the large ribosomal subunit (LSU). Mature yeast ribosomes consist of a small (40S) and a large (60S) subunit. The 40S small subunit contains 1 molecule of ribosomal RNA (18S rRNA) and 33 different proteins (encoded by 57 genes). The large 60S subunit contains 3 rRNA molecules (25S, 5.8S and 5S rRNA) and 46 different proteins (encoded by 81 genes). In terms of processing, N-terminally acetylated by acetyltransferase NatA.

It is found in the cytoplasm. In terms of biological role, component of the ribosome, a large ribonucleoprotein complex responsible for the synthesis of proteins in the cell. The small ribosomal subunit (SSU) binds messenger RNAs (mRNAs) and translates the encoded message by selecting cognate aminoacyl-transfer RNA (tRNA) molecules. The large subunit (LSU) contains the ribosomal catalytic site termed the peptidyl transferase center (PTC), which catalyzes the formation of peptide bonds, thereby polymerizing the amino acids delivered by tRNAs into a polypeptide chain. The nascent polypeptides leave the ribosome through a tunnel in the LSU and interact with protein factors that function in enzymatic processing, targeting, and the membrane insertion of nascent chains at the exit of the ribosomal tunnel. In Saccharomyces cerevisiae (strain ATCC 204508 / S288c) (Baker's yeast), this protein is Large ribosomal subunit protein eL6A.